A 308-amino-acid polypeptide reads, in one-letter code: ATP synthase gamma chain (308 aa).

This sequence belongs to the ATPase gamma chain family. In terms of assembly, F-type ATPases have 2 components, CF(1) - the catalytic core - and CF(0) - the membrane proton channel. CF(1) has five subunits: alpha(3), beta(3), gamma(1), delta(1), epsilon(1). CF(0) has three main subunits: a, b and c.

It localises to the cell membrane. Its function is as follows. Produces ATP from ADP in the presence of a proton gradient across the membrane. The gamma chain is believed to be important in regulating ATPase activity and the flow of protons through the CF(0) complex. The polypeptide is ATP synthase gamma chain (Saccharopolyspora erythraea (strain ATCC 11635 / DSM 40517 / JCM 4748 / NBRC 13426 / NCIMB 8594 / NRRL 2338)).